The chain runs to 626 residues: Extracellular metalloproteinase 1 (626 aa).

The first 17 residues, M1–S17, serve as a signal peptide directing secretion. The propeptide occupies H18–D241. Residue N315 is glycosylated (N-linked (GlcNAc...) asparagine). H425 lines the Zn(2+) pocket. E426 is a catalytic residue. H429 serves as a coordination point for Zn(2+). Positions G606 to C626 are disordered. Residues R610 to C626 are compositionally biased toward polar residues.

The protein belongs to the peptidase M36 family. It depends on Zn(2+) as a cofactor.

The protein resides in the secreted. In terms of biological role, secreted metalloproteinase that allows assimilation of proteinaceous substrates. The protein is Extracellular metalloproteinase 1 (MEP1) of Phaeosphaeria nodorum (strain SN15 / ATCC MYA-4574 / FGSC 10173) (Glume blotch fungus).